An 86-amino-acid polypeptide reads, in one-letter code: Small ribosomal subunit protein uS17 (86 aa).

This sequence belongs to the universal ribosomal protein uS17 family. In terms of assembly, part of the 30S ribosomal subunit.

Functionally, one of the primary rRNA binding proteins, it binds specifically to the 5'-end of 16S ribosomal RNA. The protein is Small ribosomal subunit protein uS17 of Bifidobacterium adolescentis (strain ATCC 15703 / DSM 20083 / NCTC 11814 / E194a).